The primary structure comprises 149 residues: MAFETTFVMLKPGVLQRRLVGEVLSRFERKGLVLTALRLLCVDTATAELHYAEHREKPFYPSLIAYITSAPVVALAFKGENAISLVRTLCGSTRVEHAQPGTIRGDFALRTTTNIVHASDSPESAARELALYFSAQDFVEWRDGNYDFF.

Positions 11, 59, 87, 93, 104, and 114 each coordinate ATP. The active-site Pros-phosphohistidine intermediate is the histidine 117.

The protein belongs to the NDK family. Homotetramer. Requires Mg(2+) as cofactor.

The protein resides in the cytoplasm. It carries out the reaction a 2'-deoxyribonucleoside 5'-diphosphate + ATP = a 2'-deoxyribonucleoside 5'-triphosphate + ADP. It catalyses the reaction a ribonucleoside 5'-diphosphate + ATP = a ribonucleoside 5'-triphosphate + ADP. Functionally, major role in the synthesis of nucleoside triphosphates other than ATP. The ATP gamma phosphate is transferred to the NDP beta phosphate via a ping-pong mechanism, using a phosphorylated active-site intermediate. This is Nucleoside diphosphate kinase from Treponema pallidum (strain Nichols).